Consider the following 822-residue polypeptide: Coiled-coil domain-containing protein 175 (822 aa).

3 coiled-coil regions span residues 129–164 (IIEI…EVLG), 223–397 (IEKQ…KQMM), and 510–537 (HLIE…IEEL).

The polypeptide is Coiled-coil domain-containing protein 175 (Ccdc175) (Mus musculus (Mouse)).